Here is a 164-residue protein sequence, read N- to C-terminus: ATP synthase subunit b (164 aa).

Residues 4 to 24 (IHFDLTLVVQVLSFLLLVYIL) traverse the membrane as a helical segment.

Belongs to the ATPase B chain family. In terms of assembly, F-type ATPases have 2 components, F(1) - the catalytic core - and F(0) - the membrane proton channel. F(1) has five subunits: alpha(3), beta(3), gamma(1), delta(1), epsilon(1). F(0) has three main subunits: a(1), b(2) and c(10-14). The alpha and beta chains form an alternating ring which encloses part of the gamma chain. F(1) is attached to F(0) by a central stalk formed by the gamma and epsilon chains, while a peripheral stalk is formed by the delta and b chains.

Its subcellular location is the cell membrane. In terms of biological role, f(1)F(0) ATP synthase produces ATP from ADP in the presence of a proton or sodium gradient. F-type ATPases consist of two structural domains, F(1) containing the extramembraneous catalytic core and F(0) containing the membrane proton channel, linked together by a central stalk and a peripheral stalk. During catalysis, ATP synthesis in the catalytic domain of F(1) is coupled via a rotary mechanism of the central stalk subunits to proton translocation. Functionally, component of the F(0) channel, it forms part of the peripheral stalk, linking F(1) to F(0). The protein is ATP synthase subunit b of Desulfitobacterium hafniense (strain Y51).